A 92-amino-acid polypeptide reads, in one-letter code: Protein S100-B (92 aa).

Serine 2 bears the N-acetylserine mark. 2 EF-hand domains span residues 13–48 and 49–84; these read DVFH…LEEI and KEQE…VTTA. Histidine 16 contributes to the Zn(2+) binding site. 2 residues coordinate Ca(2+): serine 19 and glutamate 22. Histidine 26 is a binding site for Zn(2+). The Ca(2+) site is built by lysine 27, glutamate 32, aspartate 62, aspartate 64, aspartate 66, glutamate 68, and glutamate 73. Zn(2+)-binding residues include histidine 86 and histidine 91.

It belongs to the S-100 family. In terms of assembly, dimer of either two alpha chains, or two beta chains, or one alpha and one beta chain. The S100B dimer binds two molecules of STK38. Interacts with CACYBP in a calcium-dependent manner. Interacts with ATAD3A; this interaction probably occurs in the cytosol prior to ATAD3A mitochondrial targeting. Interacts with S100A6. The S100B dimer interacts with two molecules of CAPZA1. Interacts with AGER. Interacts with PPP5C (via TPR repeats); the interaction is calcium-dependent and modulates PPP5C activity. Interacts with TPPP; this interaction inhibits TPPP dimerization. Interacts with isoform CLSTN3beta of CLSTN3; interaction promotes secretion. In terms of tissue distribution, although predominant among the water-soluble brain proteins, S100 is also found in a variety of other tissues.

It is found in the cytoplasm. Its subcellular location is the nucleus. It localises to the secreted. In terms of biological role, small zinc- and- and calcium-binding protein that is highly expressed in astrocytes and constitutes one of the most abundant soluble proteins in brain. Weakly binds calcium but binds zinc very tightly-distinct binding sites with different affinities exist for both ions on each monomer. Physiological concentrations of potassium ion antagonize the binding of both divalent cations, especially affecting high-affinity calcium-binding sites. Acts as a neurotrophic factor that promotes astrocytosis and axonal proliferation. Involved in innervation of thermogenic adipose tissue by acting as an adipocyte-derived neurotrophic factor that promotes sympathetic innervation of adipose tissue. Binds to and initiates the activation of STK38 by releasing autoinhibitory intramolecular interactions within the kinase. Interaction with AGER after myocardial infarction may play a role in myocyte apoptosis by activating ERK1/2 and p53/TP53 signaling. Could assist ATAD3A cytoplasmic processing, preventing aggregation and favoring mitochondrial localization. May mediate calcium-dependent regulation on many physiological processes by interacting with other proteins, such as TPR-containing proteins, and modulating their activity. This is Protein S100-B from Rattus norvegicus (Rat).